The following is a 102-amino-acid chain: Aspartyl/glutamyl-tRNA(Asn/Gln) amidotransferase subunit C (102 aa).

It belongs to the GatC family. In terms of assembly, heterotrimer of A, B and C subunits.

It carries out the reaction L-glutamyl-tRNA(Gln) + L-glutamine + ATP + H2O = L-glutaminyl-tRNA(Gln) + L-glutamate + ADP + phosphate + H(+). The enzyme catalyses L-aspartyl-tRNA(Asn) + L-glutamine + ATP + H2O = L-asparaginyl-tRNA(Asn) + L-glutamate + ADP + phosphate + 2 H(+). Allows the formation of correctly charged Asn-tRNA(Asn) or Gln-tRNA(Gln) through the transamidation of misacylated Asp-tRNA(Asn) or Glu-tRNA(Gln) in organisms which lack either or both of asparaginyl-tRNA or glutaminyl-tRNA synthetases. The reaction takes place in the presence of glutamine and ATP through an activated phospho-Asp-tRNA(Asn) or phospho-Glu-tRNA(Gln). The polypeptide is Aspartyl/glutamyl-tRNA(Asn/Gln) amidotransferase subunit C (Lactobacillus acidophilus (strain ATCC 700396 / NCK56 / N2 / NCFM)).